The sequence spans 327 residues: Malate dehydrogenase (327 aa).

NAD(+) is bound at residue 12 to 18 (GAAGQIG). Residues Arg93 and Arg99 each contribute to the substrate site. NAD(+)-binding positions include Asn106, Gln113, and 130 to 132 (VGN). Substrate-binding residues include Asn132 and Arg163. His188 (proton acceptor) is an active-site residue.

It belongs to the LDH/MDH superfamily. MDH type 2 family.

It catalyses the reaction (S)-malate + NAD(+) = oxaloacetate + NADH + H(+). Functionally, catalyzes the reversible oxidation of malate to oxaloacetate. The polypeptide is Malate dehydrogenase (Cupriavidus metallidurans (strain ATCC 43123 / DSM 2839 / NBRC 102507 / CH34) (Ralstonia metallidurans)).